Consider the following 71-residue polypeptide: Prokaryotic ubiquitin-like protein Pup (71 aa).

The span at 1 to 18 (MATRDSGGQSQTGRSQQG) shows a compositional bias: low complexity. Residues 1–42 (MATRDSGGQSQTGRSQQGEEIEDVTTEASPEVAERHAEITED) form a disordered region. The tract at residues 27 to 65 (EASPEVAERHAEITEDVDDLLDEIDSVLEENAEEFVRGY) is ARC ATPase binding. Residues 31–60 (EVAERHAEITEDVDDLLDEIDSVLEENAEE) adopt a coiled-coil conformation. Glu-71 participates in a covalent cross-link: Isoglutamyl lysine isopeptide (Glu-Lys) (interchain with K-? in acceptor proteins).

Belongs to the prokaryotic ubiquitin-like protein family. Strongly interacts with the proteasome-associated ATPase ARC through a hydrophobic interface; the interacting region of Pup lies in its C-terminal half. There is one Pup binding site per ARC hexamer ring.

It participates in protein degradation; proteasomal Pup-dependent pathway. In terms of biological role, protein modifier that is covalently attached to lysine residues of substrate proteins, thereby targeting them for proteasomal degradation. The tagging system is termed pupylation. In Salinispora arenicola (strain CNS-205), this protein is Prokaryotic ubiquitin-like protein Pup.